The chain runs to 530 residues: Phosphoenolpyruvate carboxykinase (ATP) (530 aa).

The substrate site is built by R58, Y195, and K201. ATP-binding positions include K201, H220, and 236 to 244 (GLSGTGKTT). Positions 201 and 220 each coordinate Mn(2+). D257 is a binding site for Mn(2+). ATP is bound by residues E285, R321, 440–441 (RI), and T446. R321 contributes to the substrate binding site.

Belongs to the phosphoenolpyruvate carboxykinase (ATP) family. It depends on Mn(2+) as a cofactor.

The protein resides in the cytoplasm. The enzyme catalyses oxaloacetate + ATP = phosphoenolpyruvate + ADP + CO2. Its pathway is carbohydrate biosynthesis; gluconeogenesis. Its function is as follows. Involved in the gluconeogenesis. Catalyzes the conversion of oxaloacetate (OAA) to phosphoenolpyruvate (PEP) through direct phosphoryl transfer between the nucleoside triphosphate and OAA. The protein is Phosphoenolpyruvate carboxykinase (ATP) of Staphylococcus epidermidis (strain ATCC 35984 / DSM 28319 / BCRC 17069 / CCUG 31568 / BM 3577 / RP62A).